The primary structure comprises 509 residues: Lysine--tRNA ligase (509 aa).

Residues M1 to L18 show a composition bias toward polar residues. The interval M1 to D20 is disordered. The Mg(2+) site is built by E418 and E425.

Belongs to the class-II aminoacyl-tRNA synthetase family. Homodimer. It depends on Mg(2+) as a cofactor.

Its subcellular location is the cytoplasm. The enzyme catalyses tRNA(Lys) + L-lysine + ATP = L-lysyl-tRNA(Lys) + AMP + diphosphate. The protein is Lysine--tRNA ligase of Psychromonas ingrahamii (strain DSM 17664 / CCUG 51855 / 37).